A 179-amino-acid chain; its full sequence is ATP-dependent protease subunit HslV (179 aa).

The active site involves Thr9. The Na(+) site is built by Ala164, Cys167, and Thr170.

The protein belongs to the peptidase T1B family. HslV subfamily. As to quaternary structure, a double ring-shaped homohexamer of HslV is capped on each side by a ring-shaped HslU homohexamer. The assembly of the HslU/HslV complex is dependent on binding of ATP.

The protein resides in the cytoplasm. It carries out the reaction ATP-dependent cleavage of peptide bonds with broad specificity.. Its activity is regulated as follows. Allosterically activated by HslU binding. Protease subunit of a proteasome-like degradation complex believed to be a general protein degrading machinery. The sequence is that of ATP-dependent protease subunit HslV from Syntrophobacter fumaroxidans (strain DSM 10017 / MPOB).